Here is a 393-residue protein sequence, read N- to C-terminus: 8-amino-7-oxononanoate synthase (393 aa).

Gly108–Phe109 lines the pyridoxal 5'-phosphate pocket. His133 is a binding site for substrate. Residues Ser182, Asp207–His210, and Thr238–Lys241 each bind pyridoxal 5'-phosphate. At Lys241 the chain carries N6-(pyridoxal phosphate)lysine. Thr355 is a substrate binding site.

This sequence belongs to the class-II pyridoxal-phosphate-dependent aminotransferase family. BioF subfamily. As to quaternary structure, homodimer. Requires pyridoxal 5'-phosphate as cofactor.

It catalyses the reaction 6-carboxyhexanoyl-[ACP] + L-alanine + H(+) = (8S)-8-amino-7-oxononanoate + holo-[ACP] + CO2. The protein operates within cofactor biosynthesis; biotin biosynthesis. Its function is as follows. Catalyzes the decarboxylative condensation of pimeloyl-[acyl-carrier protein] and L-alanine to produce 8-amino-7-oxononanoate (AON), [acyl-carrier protein], and carbon dioxide. This is 8-amino-7-oxononanoate synthase from Petrotoga mobilis (strain DSM 10674 / SJ95).